Consider the following 292-residue polypeptide: ATP synthase gamma chain (292 aa).

It belongs to the ATPase gamma chain family. F-type ATPases have 2 components, CF(1) - the catalytic core - and CF(0) - the membrane proton channel. CF(1) has five subunits: alpha(3), beta(3), gamma(1), delta(1), epsilon(1). CF(0) has three main subunits: a, b and c.

Its subcellular location is the cell inner membrane. Its function is as follows. Produces ATP from ADP in the presence of a proton gradient across the membrane. The gamma chain is believed to be important in regulating ATPase activity and the flow of protons through the CF(0) complex. The protein is ATP synthase gamma chain of Hydrogenobaculum sp. (strain Y04AAS1).